Reading from the N-terminus, the 495-residue chain is MKYILSLDQGTTSSRAVIFDKNANIKGFAKKEFKQIYPHPSWVEHDPNEIWGSLLGVMAEALANARTFPNNIEAIGITNQRETTIIWDRNTGHPIYNAIVWQDRRTAQLCDELKSKGKDKIFLQKTGLVLDAYFSGTKIKWILDNVAGARKRAEKGELCFGTIDTWIVWNLTKGKIHITDYSNASRTLLLNIKSLKWDCDLLQILDIPKSLLPELKQSSEVYGKTDASALGTEIIISGIAGDQFAATFGQACLQKGMAKNTYGTGCFVTVNIGKKPIINEQKILTSIAWGRKNSITYVFEGSVFIGGAVIQWLRDNLELFRKSGDAEAVAASVDNNGGIYFVPAFVGLGTPHWDPYARGMIIGLTRSSTKEHITRAALESIALQSFDVLTEMQNSIQEFEIKELRVDGGASKNNLLMQFQADILQCNVVRPKITETTALGSAYLAGLAVGYWESAEEITSLWKSDKIFEPSMEKSKREDLIYNWNKAIKRAKAWI.

Residue Thr-11 participates in ADP binding. Residues Thr-11, Thr-12, and Ser-13 each contribute to the ATP site. Thr-11 contributes to the sn-glycerol 3-phosphate binding site. Arg-15 contacts ADP. Residues Arg-81, Glu-82, Tyr-133, and Asp-242 each coordinate sn-glycerol 3-phosphate. Arg-81, Glu-82, Tyr-133, Asp-242, and Gln-243 together coordinate glycerol. ADP-binding residues include Thr-264 and Gly-307. Residues Thr-264, Gly-307, Gln-311, and Gly-409 each coordinate ATP. ADP is bound by residues Gly-409 and Asn-413.

It belongs to the FGGY kinase family.

The catalysed reaction is glycerol + ATP = sn-glycerol 3-phosphate + ADP + H(+). It participates in polyol metabolism; glycerol degradation via glycerol kinase pathway; sn-glycerol 3-phosphate from glycerol: step 1/1. Its activity is regulated as follows. Inhibited by fructose 1,6-bisphosphate (FBP). Its function is as follows. Key enzyme in the regulation of glycerol uptake and metabolism. Catalyzes the phosphorylation of glycerol to yield sn-glycerol 3-phosphate. This chain is Glycerol kinase, found in Borrelia hermsii (strain HS1 / DAH).